Reading from the N-terminus, the 71-residue chain is R-phycoerythrin gamma-1 chain, chloroplastic (71 aa).

Residues cysteine 25 and cysteine 34 each coordinate phycourobilin. Residue cysteine 49 coordinates (2R,3E)-phycoerythrobilin. Cysteine 58 is a binding site for phycourobilin.

As to quaternary structure, heteromer of 6 alpha, 6 beta and 1 gamma chains. In terms of processing, contains four covalently linked bilin chromophores.

It is found in the plastid. The protein localises to the chloroplast thylakoid membrane. Functionally, critical for the incorporation of phycoerythrin in the phycobilisome complex. The sequence is that of R-phycoerythrin gamma-1 chain, chloroplastic from Gastroclonium coulteri (Red alga).